We begin with the raw amino-acid sequence, 341 residues long: Antihemorrhagic factor BJ46a (341 aa).

The signal sequence occupies residues 1–19 (MNSLVALVLLGQIIGSTLS). Cystatin fetuin-A-type domains follow at residues 22 to 130 (VRGD…AKCH) and 141 to 254 (RNCP…SDCV). The Cell attachment site motif lies at 23-25 (RGD). Disulfide bonds link C28/C332, C85/C96, C110/C129, C143/C146, C205/C217, and C230/C253. A glycan (N-linked (GlcNAc...) asparagine) is linked at N95. Residue N204 is glycosylated (N-linked (GlcNAc...) asparagine). N282 and N293 each carry an N-linked (GlcNAc...) asparagine glycan.

As to quaternary structure, homodimer. As to expression, expressed by the liver.

The protein localises to the secreted. Potent inhibitor of hemorrhagic activity but also proteolytic activities of atrolysin C and jararhagin. Inhibition occurs by formation of a non-covalent complex between BJ46a and the proteinases at their metalloproteinase domains. In Bothrops jararaca (Jararaca), this protein is Antihemorrhagic factor BJ46a.